We begin with the raw amino-acid sequence, 192 residues long: Anthrone oxygenase (192 aa).

3 consecutive transmembrane segments (helical) span residues 12–32 (IVTG…TVPV), 54–74 (GHIS…YIAA), and 86–106 (AALV…VMSS). N-linked (GlcNAc...) asparagine glycans are attached at residues Asn130, Asn138, and Asn147. The helical transmembrane segment at 172 to 192 (MHLVRSLFPLMAAVLGVGICV) threads the bilayer.

This sequence belongs to the anthrone oxygenase family.

The protein resides in the membrane. It catalyses the reaction emodin anthrone + O2 = emodin + H2O + H(+). The protein operates within secondary metabolite biosynthesis. Functionally, anthrone oxygenase; part of the gene cluster that mediates the biosynthesis of monodictyphenone, a prenyl xanthone derivative. The pathway begins with the synthesis of atrochrysone thioester by the polyketide synthase (PKS) mdpG. The atrochrysone carboxyl ACP thioesterase mdpF then breaks the thioester bond and releases the atrochrysone carboxylic acid from mdpG. The atrochrysone carboxylic acid is then converted to atrochrysone which is further transformed into emodin anthrone by mdpH-1 and mdpH-2. Emodin is further modified to yield monodictyphenone via several steps involving mdpB, mdpC mdpJ, mdpK and mdpL. These enzymes with xptA, xptB and xptC are also proposed to be involved in the synthesis of shamixanthone from emodin. Especially, direct reduction of emodin by the short chain dehydrogenase mdpC followed by dehydration catalyzed by the scytalone dehydratase-like protein mdpB gives loss of oxygen and formation of chrysophanol intermediate in two simple steps. The polypeptide is Anthrone oxygenase (Emericella nidulans (strain FGSC A4 / ATCC 38163 / CBS 112.46 / NRRL 194 / M139) (Aspergillus nidulans)).